A 163-amino-acid polypeptide reads, in one-letter code: NADH-quinone oxidoreductase subunit I (163 aa).

2 4Fe-4S ferredoxin-type domains span residues 53–83 (LRRY…IEAG) and 94–123 (VRYD…EGPN). Positions 63, 66, 69, 73, 103, 106, 109, and 113 each coordinate [4Fe-4S] cluster.

This sequence belongs to the complex I 23 kDa subunit family. As to quaternary structure, NDH-1 is composed of 14 different subunits. Subunits NuoA, H, J, K, L, M, N constitute the membrane sector of the complex. [4Fe-4S] cluster is required as a cofactor.

It is found in the cell inner membrane. It carries out the reaction a quinone + NADH + 5 H(+)(in) = a quinol + NAD(+) + 4 H(+)(out). Functionally, NDH-1 shuttles electrons from NADH, via FMN and iron-sulfur (Fe-S) centers, to quinones in the respiratory chain. The immediate electron acceptor for the enzyme in this species is believed to be ubiquinone. Couples the redox reaction to proton translocation (for every two electrons transferred, four hydrogen ions are translocated across the cytoplasmic membrane), and thus conserves the redox energy in a proton gradient. This chain is NADH-quinone oxidoreductase subunit I, found in Brucella anthropi (strain ATCC 49188 / DSM 6882 / CCUG 24695 / JCM 21032 / LMG 3331 / NBRC 15819 / NCTC 12168 / Alc 37) (Ochrobactrum anthropi).